Reading from the N-terminus, the 89-residue chain is Small ribosomal subunit protein bS20 (89 aa).

It belongs to the bacterial ribosomal protein bS20 family.

In terms of biological role, binds directly to 16S ribosomal RNA. In Syntrophus aciditrophicus (strain SB), this protein is Small ribosomal subunit protein bS20.